A 796-amino-acid polypeptide reads, in one-letter code: N-terminal acetyltransferase B complex subunit MDM20 (796 aa).

Ser-2 carries the post-translational modification N-acetylserine.

It belongs to the MDM20/NAA25 family. In terms of assembly, component of the N-terminal acetyltransferase B (NatB) complex, which is composed of NAT3 and MDM20.

It localises to the cytoplasm. Its function is as follows. Non-catalytic subunit of the NatB N-terminal acetyltransferase, which catalyzes acetylation of the amino-terminal methionine residues of all proteins beginning with Met-Asp or Met-Glu and of some proteins beginning with Met-Asn or Met-Met. NatB acetylates TPM1 protein and regulates tropomyocin-actin interactions. MDM20 is required for mitochondrial inheritance during budding and together with TPM1, is essential for the integrity and assembly of actin cables. Genetically interacts with CIN8. The chain is N-terminal acetyltransferase B complex subunit MDM20 (MDM20) from Saccharomyces cerevisiae (strain ATCC 204508 / S288c) (Baker's yeast).